The sequence spans 98 residues: RING finger protein Z (98 aa).

Residues 1–10 (MGNTKTKDRQ) show a composition bias toward basic and acidic residues. The interval 1–26 (MGNTKTKDRQYQSNSSQPTNTSAPVL) is disordered. The N-myristoyl glycine; by host moiety is linked to residue Gly2. Over residues 11–23 (YQSNSSQPTNTSA) the composition is skewed to polar residues. An RING-type; atypical zinc finger spans residues 41-77 (CRCCWFADTNLVNCSNHYLCLKCLNTMLRRSNLCDIC). The PTAP/PSAP motif motif lies at 91–94 (PSAP).

The protein belongs to the arenaviridae Z protein family. Interacts with protein NP; this interaction probably directs the encapsidated genome to budding sites. Interacts (via RING domain) with polymerase L; this interaction inhibits viral transcription and replication, Z partially blocks the product exit tunnel for the releasing nascent RNA product. Interacts with the glycoprotein complex; this interaction plays a role in virion budding. Interacts with host eIF4E; this interaction results in eIF4E reduced affinity for its substrate, the 5'-m7 G cap structure. Interacts (via late-budding domain) with host TSG101; this interaction is essential for budding and release of viral particles. Interacts with host RPLP0; this interaction may serve to load ribosome-like particles inside the virion. Interacts with host PML; this interaction induces PML bodies redistribution in the cytoplasm upon viral infection. Myristoylation is required for the role of RING finger protein Z in assembly and budding.

It is found in the virion. The protein resides in the host cytoplasm. It localises to the host perinuclear region. Its subcellular location is the host cell membrane. In terms of biological role, plays a crucial role in virion assembly and budding. Expressed late in the virus life cycle, it acts as an inhibitor of viral transcription and RNA synthesis by interacting with the viral polymerase L. Presumably recruits the NP encapsidated genome to cellular membranes at budding sites via direct interaction with NP. Plays critical roles in the final steps of viral release by interacting with host TSG101, a member of the vacuolar protein-sorting pathway and using other cellular host proteins involved in vesicle formation pathway. The budding of the virus progeny occurs after association of protein Z with the viral glycoprotein complex SSP-GP1-GP2 at the cell periphery, step that requires myristoylation of protein Z. Also selectively represses protein production by associating with host eIF4E. In cell-based minigenome assay, has an inhibitory effect on the ribonucleoprotein machinery (vRNP), which is responsible for the replication and transcription of the viral genome. The sequence is that of RING finger protein Z from Chapare mammarenavirus (isolate Human/Bolivia/810419/2003).